Here is a 607-residue protein sequence, read N- to C-terminus: Pogo transposable element with KRAB domain (607 aa).

Residues 8–29 adopt a coiled-coil conformation; sequence LNLTLKEEQKEEEVEIQELEDG. Residue K13 forms a Glycyl lysine isopeptide (Lys-Gly) (interchain with G-Cter in SUMO2) linkage. The region spanning 47–118 is the KRAB domain; that stretch reads ALFDEVAIYF…DEWRLQGVTF (72 aa). The region spanning 250-323 is the HTH CENPB-type domain; sequence AFRGPKNGRF…MRRYDLSLRH (74 aa). The region spanning 355-567 is the DDE-1 domain; it reads YEVAQMGNAD…ISSESIVQGF (213 aa). K384 is covalently cross-linked (Glycyl lysine isopeptide (Lys-Gly) (interchain with G-Cter in SUMO2)). A disordered region spans residues 588 to 607; that stretch reads GELPKEPPKECGPESVAEGD. Residues 589–599 show a composition bias toward basic and acidic residues; it reads ELPKEPPKECG.

It localises to the nucleus. The polypeptide is Pogo transposable element with KRAB domain (Pogk) (Mus musculus (Mouse)).